Here is a 171-residue protein sequence, read N- to C-terminus: MAEKRNIFLVGPMGAGKSTIGRHLAQMLHLEFHDSDQEIENRTGADIAWVFDVEGEEGFRRRETQVVADLTEKQGIVLATGGGSIQSKDIRNNLSARGIVVYLETTIDKQVARTQRDKRRPLLQVEDPREVLEKLAEIRNPLYEEIADVIVKTDEQSAKVVANQIIDQLGF.

14-19 serves as a coordination point for ATP; sequence GAGKST. Residue serine 18 coordinates Mg(2+). The substrate site is built by aspartate 36, arginine 60, and glycine 82. Residue arginine 120 participates in ATP binding. Substrate is bound at residue arginine 139. Glutamine 156 provides a ligand contact to ATP.

The protein belongs to the shikimate kinase family. Monomer. Mg(2+) serves as cofactor.

It localises to the cytoplasm. The catalysed reaction is shikimate + ATP = 3-phosphoshikimate + ADP + H(+). The protein operates within metabolic intermediate biosynthesis; chorismate biosynthesis; chorismate from D-erythrose 4-phosphate and phosphoenolpyruvate: step 5/7. Functionally, catalyzes the specific phosphorylation of the 3-hydroxyl group of shikimic acid using ATP as a cosubstrate. The polypeptide is Shikimate kinase (Shewanella loihica (strain ATCC BAA-1088 / PV-4)).